The following is a 167-amino-acid chain: Phosphopantetheine adenylyltransferase (167 aa).

Ser-10 is a binding site for substrate. Residues 10-11 (SF) and His-18 each bind ATP. Residues Lys-42, Ala-79, and Arg-93 each contribute to the substrate site. ATP is bound by residues 94-96 (GLR), Glu-104, and 129-135 (VGHITAT).

This sequence belongs to the bacterial CoaD family. Homohexamer. It depends on Mg(2+) as a cofactor.

The protein resides in the cytoplasm. The catalysed reaction is (R)-4'-phosphopantetheine + ATP + H(+) = 3'-dephospho-CoA + diphosphate. It participates in cofactor biosynthesis; coenzyme A biosynthesis; CoA from (R)-pantothenate: step 4/5. Reversibly transfers an adenylyl group from ATP to 4'-phosphopantetheine, yielding dephospho-CoA (dPCoA) and pyrophosphate. This chain is Phosphopantetheine adenylyltransferase, found in Methylocella silvestris (strain DSM 15510 / CIP 108128 / LMG 27833 / NCIMB 13906 / BL2).